A 662-amino-acid chain; its full sequence is Rap guanine nucleotide exchange factor-like 1 (662 aa).

The interval 1 to 149 (MKPLEKFLKK…PPWAPLGAPE (149 aa)) is disordered. Residues 20 to 48 (VAGGPGGGLGSCGGPGGGGGPGGGGGPAG) show a composition bias toward gly residues. The span at 49–64 (GQRSLQRRQSVSRLLL) shows a compositional bias: low complexity. Over residues 73-82 (AEPGLEPPVP) the composition is skewed to pro residues. The segment covering 120–135 (LRSPSSYSSDELSPGE) has biased composition (low complexity). The Ras-GEF domain occupies 424 to 660 (EPEDVANHLT…FELSYKLEAN (237 aa)).

Its function is as follows. Probable guanine nucleotide exchange factor (GEF). This is Rap guanine nucleotide exchange factor-like 1 (RAPGEFL1) from Homo sapiens (Human).